We begin with the raw amino-acid sequence, 285 residues long: Sulfotransferase 2A2 (285 aa).

Residues K44, S45, G46, T47, N48, and W49 each contribute to the 3'-phosphoadenylyl sulfate site. The Proton acceptor role is filled by H99. 7 residues coordinate 3'-phosphoadenylyl sulfate: R121, S129, Y184, S218, R247, K248, and G249.

This sequence belongs to the sulfotransferase 1 family. In terms of tissue distribution, detected in liver.

It is found in the cytoplasm. It catalyses the reaction an alcohol + 3'-phosphoadenylyl sulfate = an alkyl sulfate + adenosine 3',5'-bisphosphate + H(+). Sulfotransferase that utilizes 3'-phospho-5'-adenylyl sulfate (PAPS) as sulfonate donor to catalyze the sulfate conjugation of a potential wide variety of acceptor molecules bearing a hydroxyl group. Sulfonation increases the water solubility of most compounds, and therefore their renal excretion, but it can also result in bioactivation to form active metabolites. This Rattus norvegicus (Rat) protein is Sulfotransferase 2A2.